The sequence spans 477 residues: Glycogen synthase (477 aa).

Lysine 15 contributes to the ADP-alpha-D-glucose binding site.

The protein belongs to the glycosyltransferase 1 family. Bacterial/plant glycogen synthase subfamily.

The enzyme catalyses [(1-&gt;4)-alpha-D-glucosyl](n) + ADP-alpha-D-glucose = [(1-&gt;4)-alpha-D-glucosyl](n+1) + ADP + H(+). Its pathway is glycan biosynthesis; glycogen biosynthesis. Synthesizes alpha-1,4-glucan chains using ADP-glucose. This chain is Glycogen synthase, found in Escherichia coli O139:H28 (strain E24377A / ETEC).